Consider the following 351-residue polypeptide: Peptide chain release factor 1 (351 aa).

Gln229 is modified (N5-methylglutamine).

It belongs to the prokaryotic/mitochondrial release factor family. Post-translationally, methylated by PrmC. Methylation increases the termination efficiency of RF1.

The protein resides in the cytoplasm. Peptide chain release factor 1 directs the termination of translation in response to the peptide chain termination codons UAG and UAA. In Cereibacter sphaeroides (strain ATCC 17025 / ATH 2.4.3) (Rhodobacter sphaeroides), this protein is Peptide chain release factor 1.